The chain runs to 492 residues: NADH-quinone oxidoreductase subunit N 2 (492 aa).

The next 14 membrane-spanning stretches (helical) occupy residues 16-36 (ILPEIVLAVFGIVVMMADALI), 44-64 (PLGYLSLIGVLVSLGAIACQA), 87-107 (FSLFFHVLIALITAAVLLVSF), 118-138 (GEYYAIILFSALGMMLMTSAT), 140-160 (LVLIFIALEISSIGSYVLAAM), 175-195 (FLLGSFATAFFLYGVALIFGA), 216-236 (PIIYLAVALMFIGLGFKVAAA), 250-270 (PSPIVALMSTGPKAAAFAVLL), 282-302 (FWIVWVSAALSMTIGNIGALV), 309-329 (LLAYSSIAHAGYMLVAFAAAK), 333-353 (ISAAIFYTATYAAMNVGAFAV), 381-401 (AAILTVFLLSLIGIPVTGGFF), 416-438 (VWLTIIGVINSAVGAYYYLRIIV), and 455-475 (PFGLALALAMCLMFTIYLGVL).

It belongs to the complex I subunit 2 family. NDH-1 is composed of 14 different subunits. Subunits NuoA, H, J, K, L, M, N constitute the membrane sector of the complex.

It localises to the cell inner membrane. It carries out the reaction a quinone + NADH + 5 H(+)(in) = a quinol + NAD(+) + 4 H(+)(out). NDH-1 shuttles electrons from NADH, via FMN and iron-sulfur (Fe-S) centers, to quinones in the respiratory chain. The immediate electron acceptor for the enzyme in this species is believed to be ubiquinone. Couples the redox reaction to proton translocation (for every two electrons transferred, four hydrogen ions are translocated across the cytoplasmic membrane), and thus conserves the redox energy in a proton gradient. This Koribacter versatilis (strain Ellin345) protein is NADH-quinone oxidoreductase subunit N 2.